The primary structure comprises 309 residues: MTSKLDQLKKFTTVVADTGDFGAIKSLKPQDATTNPSLLLKAASSESNDQMLADAFSGAKGDIGLACDRFAVAIGQEILKVVPGRVSTEVDARLSFDTDALIERSERIIGLYDTAGISRDRVLIKLAATWEGIRAAEKLEKDGIQTNLTLLFSFAQAVACAEAGVFLISPFVGRIYDWYKKSSGTDYVGADDPGVQSVTRIYNYYKANDFKTVVMGASFRNLNQIEQLAGCDRLTISTELLKQLAEDTGTLEQKLAPGNAGEARQSLTESQFRWASNEDAMATEKLAEGIRQFARDQEKLEALLSAKKS.

Lysine 125 acts as the Schiff-base intermediate with substrate in catalysis.

Belongs to the transaldolase family. Type 1 subfamily. In terms of assembly, homodimer.

It localises to the cytoplasm. The enzyme catalyses D-sedoheptulose 7-phosphate + D-glyceraldehyde 3-phosphate = D-erythrose 4-phosphate + beta-D-fructose 6-phosphate. Its pathway is carbohydrate degradation; pentose phosphate pathway; D-glyceraldehyde 3-phosphate and beta-D-fructose 6-phosphate from D-ribose 5-phosphate and D-xylulose 5-phosphate (non-oxidative stage): step 2/3. In terms of biological role, transaldolase is important for the balance of metabolites in the pentose-phosphate pathway. This is Transaldolase from Pseudomonas syringae pv. tomato (strain ATCC BAA-871 / DC3000).